A 338-amino-acid chain; its full sequence is Lipoate-protein ligase A (338 aa).

The BPL/LPL catalytic domain maps to 29–216 (PATQRVLFLW…AFFAHYGERV (188 aa)). Residues R71, 76–79 (GAVF), and K134 each bind ATP. K134 is a (R)-lipoate binding site.

Belongs to the LplA family. Monomer.

It is found in the cytoplasm. It carries out the reaction L-lysyl-[lipoyl-carrier protein] + (R)-lipoate + ATP = N(6)-[(R)-lipoyl]-L-lysyl-[lipoyl-carrier protein] + AMP + diphosphate + H(+). It participates in protein modification; protein lipoylation via exogenous pathway; protein N(6)-(lipoyl)lysine from lipoate: step 1/2. The protein operates within protein modification; protein lipoylation via exogenous pathway; protein N(6)-(lipoyl)lysine from lipoate: step 2/2. In terms of biological role, catalyzes both the ATP-dependent activation of exogenously supplied lipoate to lipoyl-AMP and the transfer of the activated lipoyl onto the lipoyl domains of lipoate-dependent enzymes. The protein is Lipoate-protein ligase A of Salmonella schwarzengrund (strain CVM19633).